A 348-amino-acid chain; its full sequence is WRKY transcription factor WRKY71 (348 aa).

Residues 50 to 84 adopt a coiled-coil conformation; it reads VAALEAELKRMGAENRQLSEMLAAVAAKYEALQSQ. Disordered regions lie at residues 91-141 and 246-287; these read ASAN…APHH and GEHN…APVV. Residues 102 to 114 show a composition bias toward low complexity; it reads NQSSTSEGGSVSP. A Nuclear localization signal motif is present at residues 116 to 122; that stretch reads RKRKSES. A compositionally biased stretch (pro residues) spans 126–136; that stretch reads SPPPPPPPHPH. The WRKY DNA-binding region spans 187 to 253; the sequence is DLSLVVKDGY…YEGEHNHGQP (67 aa). The transcription repression of gibberellic acid (GA)-induced promoters stretch occupies residues 267-348; it reads SGKSAGKPPH…RILELSPTKD (82 aa). A compositionally biased stretch (pro residues) spans 275 to 286; sequence PHAPAAAPPAPV.

Belongs to the WRKY group II-a family. Interacts with WRKY51; this interaction promotes W box binding of the complex WRKY51/WRKY71 in a zinc ion-dependent manner. As to expression, highly expressed in aleurone cells. In seeds, predominantly present in the plumule, radicle and scutellum of the embryo. Expressed in roots, stems, young leaves and spikelets.

It is found in the nucleus. Transcription repressor. Interacts specifically with the W box (5'-(T)TGAC[CT]-3'), a frequently occurring elicitor-responsive cis-acting element. Represses specifically gibberellic acid (GA)-induced promoters in aleurone cells, probably by interfering with GAM1. Regulates, probably indirectly, the activation of defense-related genes such as GF14E during defense response. Modulates plant innate immunity against X.oryzae pv. oryzae (Xoo). Confers resistance to the virulent bacterial pathogen X.oryzae pv. oryzae (Xoo) 13751, probably via the regulation of NPR1 and PR1b defense signaling pathways. This chain is WRKY transcription factor WRKY71, found in Oryza sativa subsp. indica (Rice).